A 189-amino-acid chain; its full sequence is Protein Rex (189 aa).

Positions 1 to 16 (MPKTRRRPRRSQRKRP) are enriched in basic residues. The tract at residues 1–27 (MPKTRRRPRRSQRKRPPTPWPTSQGLD) is disordered. Residues 2–18 (PKTRRRPRRSQRKRPPT) carry the Nuclear localization signal, and RNA-binding (RxRE) motif. The homomultimerization stretch occupies residues 56–70 (RPAYIVTPYWPPVQS). Ser-70 is subject to Phosphoserine; by host. The Nuclear export signal motif lies at 82–93 (LSAQLYSSLSLD). The tract at residues 87–189 (YSSLSLDSPP…PPSPGPSCPM (103 aa)) is disordered. Positions 105 to 114 (PLRSLPRQSL) are enriched in low complexity. The interval 123–131 (PSSRPCANT) is homomultimerization. A compositionally biased stretch (polar residues) spans 143-164 (LGSTSQPCLFQTPDSGPKTCTP). Position 174 is a phosphothreonine; by host (Thr-174). The residue at position 177 (Ser-177) is a Phosphoserine; by host. The segment covering 178-189 (FPPPSPGPSCPM) has biased composition (pro residues).

It belongs to the deltaretrovirus Rex protein family. As to quaternary structure, homomultimer. Multimeric assembly is essential for activity and involves XPO1. Binds to human XPO1 and KPNB1. Interacts (via N-terminal nuclear localization signal) with human NPM1. In terms of processing, phosphorylated.

Its subcellular location is the host nucleus. It localises to the host nucleolus. The protein localises to the host cytoplasm. Its function is as follows. Rex escorts unspliced gag-pro-pol and singly spliced env mRNAs out of the nucleus of infected cells. These mRNAs carry a recognition sequence called Rex responsive element (RxRE or XRE) located at the 3' region of the long terminal repeat (LTR). This function is essential since most HTLV proteins are translated from unspliced or partially spliced pre-mRNAs that cannot exit the nucleus by the pathway used by fully processed cellular mRNAs. Rex itself is translated from a fully spliced mRNA that probably readily exits the nucleus. Rex's nuclear localization signal (NLS) binds directly to KPNB1/importin beta-1 without previous binding to KPNA1/importin alpha-1. KPNB1 binds to the GDP bound form of RAN (Ran-GDP) and targets Rex to the nucleus. In the nucleus, the conversion from Ran-GDP to Ran-GTP dissociates Rex from KPNB1 and allows Rex's binding to the RRE in viral pre-mRNAs. Rex multimerizes on the RRE via cooperative assembly. This multimerization is critical for its full biological activity, since it may shield the viral RNA from being spliced or down-regulated, and probably exposes Rex's nuclear export signal (NES) to the surface. Rex can then form a complex with XPO1/CRM1, RANBP3 and Ran-GTP, leading to nuclear export of the complex. Conversion from Ran-GTP to Ran-GDP mediates dissociation of the Rex/RRE/XPO1/RANBP3/RAN complex, so that Rex can return to the nucleus for a subsequent round of export. The polypeptide is Protein Rex (Human T-cell leukemia virus 1 (isolate Caribbea HS-35 subtype A) (HTLV-1)).